We begin with the raw amino-acid sequence, 295 residues long: Probable protein phosphatase 2C 6 (295 aa).

The 272-residue stretch at 23–294 (QYAATHMQGW…DNMTCILIQF (272 aa)) folds into the PPM-type phosphatase domain. The Mn(2+) site is built by Asp57, Gly58, Asp237, and Asp285.

The protein belongs to the PP2C family. It depends on Mg(2+) as a cofactor. Requires Mn(2+) as cofactor.

It localises to the membrane. It catalyses the reaction O-phospho-L-seryl-[protein] + H2O = L-seryl-[protein] + phosphate. The catalysed reaction is O-phospho-L-threonyl-[protein] + H2O = L-threonyl-[protein] + phosphate. Enzyme with a broad specificity. The chain is Probable protein phosphatase 2C 6 from Paramecium tetraurelia.